We begin with the raw amino-acid sequence, 354 residues long: MALNHTALPQDERLPHYLRDGDPFASKLSWEADLVAGFYLTIIGILSTFGNGYVLYMSSRRKKKLRPAEIMTINLAVCDLGISVVGKPFTIISCFCHRWVFGWIGCRWYGWAGFFFGCGSLITMTAVSLDRYLKICYLSYGVWLKRKHAYICLAAIWAYASFWTTMPLVGLGDYVPEPFGTSCTLDWWLAQASVGGQVFILNILFFCLLLPTAVIVFSYVKIIAKVKSSSKEVAHFDSRIHSSHVLEMKLTKVAMLICAGFLIAWIPYAVVSVWSAFGRPDSIPIQLSVVPTLLAKSAAMYNPIIYQVIDYKFACCQTGGLKATKKKSLEGFRLHTVTTVRKSSAVLEIHEEWE.

Over 1–33 (MALNHTALPQDERLPHYLRDGDPFASKLSWEAD) the chain is Extracellular. The N-linked (GlcNAc...) asparagine glycan is linked to Asn4. Residues 34–54 (LVAGFYLTIIGILSTFGNGYV) traverse the membrane as a helical segment. The Cytoplasmic segment spans residues 55-74 (LYMSSRRKKKLRPAEIMTIN). Residues 75 to 95 (LAVCDLGISVVGKPFTIISCF) traverse the membrane as a helical segment. The Extracellular segment spans residues 96–108 (CHRWVFGWIGCRW). A disulfide bridge links Cys106 with Cys183. Residues 109–129 (YGWAGFFFGCGSLITMTAVSL) form a helical membrane-spanning segment. Residues 130–150 (DRYLKICYLSYGVWLKRKHAY) are Cytoplasmic-facing. The helical transmembrane segment at 151–171 (ICLAAIWAYASFWTTMPLVGL) threads the bilayer. Over 172–197 (GDYVPEPFGTSCTLDWWLAQASVGGQ) the chain is Extracellular. Residues 198-218 (VFILNILFFCLLLPTAVIVFS) traverse the membrane as a helical segment. Residues 219–252 (YVKIIAKVKSSSKEVAHFDSRIHSSHVLEMKLTK) are Cytoplasmic-facing. The chain crosses the membrane as a helical span at residues 253-273 (VAMLICAGFLIAWIPYAVVSV). The Extracellular segment spans residues 274-288 (WSAFGRPDSIPIQLS). The chain crosses the membrane as a helical span at residues 289 to 309 (VVPTLLAKSAAMYNPIIYQVI). N6-(retinylidene)lysine is present on Lys296. The Cytoplasmic portion of the chain corresponds to 310–353 (DYKFACCQTGGLKATKKKSLEGFRLHTVTTVRKSSAVLEIHEEW). 2 S-palmitoyl cysteine lipidation sites follow: Cys315 and Cys316.

Belongs to the G-protein coupled receptor 1 family. Opsin subfamily. It is uncertain whether Cys-315 or Cys-316 is palmitoylated. As to expression, detected in brain and retina and cell lines derived from neural retina.

Its subcellular location is the cell membrane. G-protein coupled receptor which selectively activates G(i) type G proteins via ultraviolet A (UVA) light-mediated activation in the retina. Preferentially binds the chromophore 11-cis retinal and is a bistable protein that displays emission peaks at 380 nm (UVA light) and 470 nm (blue light). Required for the light-response in the inner plexiform layer, and contributes to the regulation of the light-response in the nerve fiber layer, via phosphorylated DAT/SLC6A3 dopamine uptake. Involved in local corneal and retinal circadian rhythm photoentrainment via modulation of the UVA light-induced phase-shift of the retina clock. Acts as a circadian photoreceptor in the outer ear, via modulation of circadian clock-gene expression in response to violet light during the light-to-dark transition phase and night phase of the circadian cycle. Required in the retina to negatively regulate hyaloid vessel regression during postnatal development via light-dependent OPN5-SLC32A1-DRD2-VEGFR2 signaling. Involved in the light-dependent regulation of retina and vitreous compartment dopamine levels. In Homo sapiens (Human), this protein is Opsin-5 (OPN5).